A 257-amino-acid chain; its full sequence is UPF0246 protein PC1_3665 (257 aa).

The protein belongs to the UPF0246 family.

The sequence is that of UPF0246 protein PC1_3665 from Pectobacterium carotovorum subsp. carotovorum (strain PC1).